Here is a 734-residue protein sequence, read N- to C-terminus: Ribosomal RNA large subunit methyltransferase K/L (734 aa).

Residues 43–154 (VGYRSCLWSR…RNQLTLSLDL (112 aa)) enclose the THUMP domain.

Belongs to the methyltransferase superfamily. RlmKL family.

It localises to the cytoplasm. The catalysed reaction is guanosine(2445) in 23S rRNA + S-adenosyl-L-methionine = N(2)-methylguanosine(2445) in 23S rRNA + S-adenosyl-L-homocysteine + H(+). The enzyme catalyses guanosine(2069) in 23S rRNA + S-adenosyl-L-methionine = N(2)-methylguanosine(2069) in 23S rRNA + S-adenosyl-L-homocysteine + H(+). Its function is as follows. Specifically methylates the guanine in position 2445 (m2G2445) and the guanine in position 2069 (m7G2069) of 23S rRNA. The protein is Ribosomal RNA large subunit methyltransferase K/L of Hydrogenovibrio crunogenus (strain DSM 25203 / XCL-2) (Thiomicrospira crunogena).